The chain runs to 91 residues: Small ribosomal subunit protein bS20 (91 aa).

The segment covering 1–21 (MPLHKSAEKRLRQSARRNERN) has biased composition (basic and acidic residues). 2 disordered regions span residues 1–25 (MPLH…RARK) and 71–91 (NKAS…AQKD).

Belongs to the bacterial ribosomal protein bS20 family.

In terms of biological role, binds directly to 16S ribosomal RNA. The polypeptide is Small ribosomal subunit protein bS20 (Prosthecochloris aestuarii (strain DSM 271 / SK 413)).